The sequence spans 260 residues: Hydroxypyruvate/pyruvate aldolase Bphyt_0320 (260 aa).

H48 (proton acceptor) is an active-site residue. 2 residues coordinate a divalent metal cation: E157 and D183.

This sequence belongs to the HpcH/HpaI aldolase family. Mn(2+) serves as cofactor. It depends on Mg(2+) as a cofactor. Requires Co(2+) as cofactor.

It catalyses the reaction D-glyceraldehyde + 3-hydroxypyruvate = 2-dehydro-D-gluconate. It carries out the reaction D-glyceraldehyde + pyruvate = 2-dehydro-3-deoxy-L-galactonate. The catalysed reaction is 2-dehydro-3-deoxy-D-gluconate = D-glyceraldehyde + pyruvate. Its function is as follows. Aldolase which can catalyze in vitro the aldolisation reaction between hydroxypyruvate (HPA) or pyruvate (PA) and D-glyceraldehyde (D-GA). The condensation of hydroxypyruvate and D-glyceraldehyde produces 2-dehydro-D-gluconate. The condensation of pyruvate and D-glyceraldehyde produces 2-dehydro-3-deoxy-L-galactonate as the major product and 2-dehydro-3-deoxy-D-gluconate. Also catalyzes the retro-aldol type decarboxylation of oxaloacetate, a general property of known pyruvate aldolases. This is Hydroxypyruvate/pyruvate aldolase Bphyt_0320 from Paraburkholderia phytofirmans (strain DSM 17436 / LMG 22146 / PsJN) (Burkholderia phytofirmans).